We begin with the raw amino-acid sequence, 84 residues long: U8-theraphotoxin-Hhn1a (84 aa).

The first 21 residues, 1–21 (MKVVLLECLVWMMAMMELVSC), serve as a signal peptide directing secretion. Disulfide bonds link Cys-23–Cys-35, Cys-29–Cys-44, Cys-34–Cys-67, Cys-54–Cys-75, and Cys-69–Cys-81.

This sequence belongs to the AVIT (prokineticin) family. Expressed by the venom gland.

It localises to the secreted. The polypeptide is U8-theraphotoxin-Hhn1a (Cyriopagopus hainanus (Chinese bird spider)).